Here is a 570-residue protein sequence, read N- to C-terminus: Probable D-xylulose kinase A (570 aa).

The substrate site is built by histidine 95, arginine 166, aspartate 282, and asparagine 283. ATP is bound by residues tryptophan 364, 469-470, and asparagine 473; that span reads GG.

This sequence belongs to the FGGY kinase family.

It localises to the cytoplasm. The enzyme catalyses D-xylulose + ATP = D-xylulose 5-phosphate + ADP + H(+). In terms of biological role, highly specific D-xylulose kinase which participates in the catabolism of xylose. Xylose is a major component of hemicelluloses such as xylan. Most fungi utilize D-xylose via three enzymatic reactions, xylose reductase (XR), xylitol dehydrogenase (XDH), and xylulokinase, to form xylulose 5-phosphate, which enters pentose phosphate pathway. The protein is Probable D-xylulose kinase A (xkiA) of Aspergillus niger (strain ATCC MYA-4892 / CBS 513.88 / FGSC A1513).